The sequence spans 589 residues: Aspartate--tRNA ligase (589 aa).

Residue Glu-174 participates in L-aspartate binding. The segment at 198-201 (QLFK) is aspartate. Arg-220 contacts L-aspartate. ATP is bound by residues 220–222 (RDE) and Gln-229. His-448 contacts L-aspartate. Position 484 (Glu-484) interacts with ATP. Position 491 (Arg-491) interacts with L-aspartate. 536–539 (GLDR) lines the ATP pocket.

This sequence belongs to the class-II aminoacyl-tRNA synthetase family. Type 1 subfamily. Homodimer.

The protein localises to the cytoplasm. It carries out the reaction tRNA(Asp) + L-aspartate + ATP = L-aspartyl-tRNA(Asp) + AMP + diphosphate. Functionally, catalyzes the attachment of L-aspartate to tRNA(Asp) in a two-step reaction: L-aspartate is first activated by ATP to form Asp-AMP and then transferred to the acceptor end of tRNA(Asp). The chain is Aspartate--tRNA ligase from Leuconostoc citreum (strain KM20).